A 159-amino-acid chain; its full sequence is Ribosomal RNA large subunit methyltransferase H (159 aa).

S-adenosyl-L-methionine is bound by residues L76, G108, and 127–132 (FGKLTM).

Belongs to the RNA methyltransferase RlmH family. As to quaternary structure, homodimer.

It localises to the cytoplasm. The catalysed reaction is pseudouridine(1915) in 23S rRNA + S-adenosyl-L-methionine = N(3)-methylpseudouridine(1915) in 23S rRNA + S-adenosyl-L-homocysteine + H(+). Its function is as follows. Specifically methylates the pseudouridine at position 1915 (m3Psi1915) in 23S rRNA. The sequence is that of Ribosomal RNA large subunit methyltransferase H from Lactobacillus delbrueckii subsp. bulgaricus (strain ATCC 11842 / DSM 20081 / BCRC 10696 / JCM 1002 / NBRC 13953 / NCIMB 11778 / NCTC 12712 / WDCM 00102 / Lb 14).